The primary structure comprises 475 residues: Zinc-regulated GTPase metalloprotein activator 1 (475 aa).

G50–T57 lines the GTP pocket. Zn(2+) contacts are provided by C116, C118, and C119. The short motif at C116–C119 is the CXCC motif element. Residues C119 to E123 and N229 to D232 each bind GTP. Residues I302–L420 form the CobW C-terminal domain. Positions I440–K467 form a coiled coil. The segment covering E445–Y460 has biased composition (acidic residues). Residues E445–K475 form a disordered region. The segment covering K461–K475 has biased composition (basic and acidic residues).

The protein belongs to the SIMIBI class G3E GTPase family. ZNG1 subfamily.

The catalysed reaction is GTP + H2O = GDP + phosphate + H(+). Its function is as follows. Zinc chaperone that directly transfers zinc cofactor to target metalloproteins, thereby activating them. Zinc is transferred from the CXCC motif in the GTPase domain to the zinc binding site in target proteins in a process requiring GTP hydrolysis. In Dictyostelium discoideum (Social amoeba), this protein is Zinc-regulated GTPase metalloprotein activator 1.